We begin with the raw amino-acid sequence, 218 residues long: tRNA (guanine-N(7)-)-methyltransferase (218 aa).

Residues glutamate 46, glutamate 71, aspartate 98, and aspartate 120 each coordinate S-adenosyl-L-methionine. Residue aspartate 120 is part of the active site. Position 124 (lysine 124) interacts with substrate. The interaction with RNA stretch occupies residues 126 to 131 (RHEKRR). Residues aspartate 156 and 196-199 (TEYE) each bind substrate.

This sequence belongs to the class I-like SAM-binding methyltransferase superfamily. TrmB family.

It carries out the reaction guanosine(46) in tRNA + S-adenosyl-L-methionine = N(7)-methylguanosine(46) in tRNA + S-adenosyl-L-homocysteine. Its pathway is tRNA modification; N(7)-methylguanine-tRNA biosynthesis. Catalyzes the formation of N(7)-methylguanine at position 46 (m7G46) in tRNA. This chain is tRNA (guanine-N(7)-)-methyltransferase, found in Lactobacillus johnsonii (strain CNCM I-12250 / La1 / NCC 533).